The sequence spans 354 residues: MADQTNPWDTAQVADTTTQTADAWGTPAGVATDGGSTDWLNSAPAPAPEHFSLLDPFHKTLIPLDSWVTEGIDWVVTHFRPLFQGIRVPVDYILNGFQQLLLGMPAPVAIILFALIAWQVSGVGMGIATLISLIAIGAIGAWSQAMITLALVLTALLFCVVIGLPMGIWLARSPRAAKIVRPLLDAMQTTPAFVYLVPIVMLFGIGNVPGVVVTIIFALPPIVRLTILGINQVPADLIEASRSFGASPRQMLFKVQLPLAMPTIMAGVNQTLMLALSMVVIASMIAVGGLGQMVLRGIGRLDMGLATVGGVGIVILAIILDRLTQAVGRDSRSRGNRRWYTTGPVGLITRPFVK.

A disordered region spans residues 1 to 28 (MADQTNPWDTAQVADTTTQTADAWGTPA). Residues 1 to 99 (MADQTNPWDT…VDYILNGFQQ (99 aa)) are Cytoplasmic-facing. Low complexity predominate over residues 9–23 (DTAQVADTTTQTADA). The chain crosses the membrane as a helical span at residues 100–120 (LLLGMPAPVAIILFALIAWQV). A topological domain (periplasmic) is located at residue S121. A helical membrane pass occupies residues 122-142 (GVGMGIATLISLIAIGAIGAW). At 143–148 (SQAMIT) the chain is on the cytoplasmic side. In terms of domain architecture, ABC transmembrane type-1 spans 145–324 (AMITLALVLT…ILAIILDRLT (180 aa)). A helical transmembrane segment spans residues 149–169 (LALVLTALLFCVVIGLPMGIW). Topologically, residues 170–198 (LARSPRAAKIVRPLLDAMQTTPAFVYLVP) are periplasmic. A helical membrane pass occupies residues 199–219 (IVMLFGIGNVPGVVVTIIFAL). At 220–270 (PPIVRLTILGINQVPADLIEASRSFGASPRQMLFKVQLPLAMPTIMAGVNQ) the chain is on the cytoplasmic side. A helical transmembrane segment spans residues 271 to 291 (TLMLALSMVVIASMIAVGGLG). Topologically, residues 292 to 300 (QMVLRGIGR) are periplasmic. Residues 301 to 321 (LDMGLATVGGVGIVILAIILD) traverse the membrane as a helical segment. Over 322 to 354 (RLTQAVGRDSRSRGNRRWYTTGPVGLITRPFVK) the chain is Cytoplasmic.

It belongs to the binding-protein-dependent transport system permease family. CysTW subfamily. The complex is composed of two ATP-binding proteins (ProV), two transmembrane proteins (ProW) and a solute-binding protein (ProX).

It is found in the cell inner membrane. Its function is as follows. Part of the ProU ABC transporter complex involved in glycine betaine and proline betaine uptake. Probably responsible for the translocation of the substrate across the membrane. The protein is Glycine betaine/proline betaine transport system permease protein ProW of Salmonella typhimurium (strain LT2 / SGSC1412 / ATCC 700720).